We begin with the raw amino-acid sequence, 255 residues long: Tablysin 15 (255 aa).

The first 23 residues, 1–23 (MTSIPVSSFLLAALVLQYATSDA), serve as a signal peptide directing secretion. 3 disulfides stabilise this stretch: C27/C40, C31/C117, and C49/C110. The short motif at 32–34 (RGD) is the Cell attachment site element. The region spanning 67–211 (LSKINDVRDH…KARALLTCNF (145 aa)) is the SCP domain. Residues W82, H153, and K156 each coordinate leukotriene E4. Cystine bridges form between C192/C209 and C232/C243.

Belongs to the CRISP family. As to expression, expressed in salivary glands.

Its subcellular location is the secreted. Functionally, anti-inflammatory scavenger of eicosanoids and antithrombotic protein that inhibits platelets aggregation induced by collagen, ADP and convulxin (GPVI agonist). Exhibits high affinity binding for glycoprotein IIb-IIIa receptor (ITGA2B/ITGB3) and endothelial cell alphaVbeta3 (ITGAV/ITGB3) integrins, but not for alpha-5/beta-1 or alpha-2/beta-1. Accordingly, it blocks endothelial cell adhesion to vitronectin (IC(50)~1 nM) and marginally to fibronectin (IC(50)~1 uM), but not to collagen. It also inhibits fibroblast growth factor (FGF)-induced endothelial cell proliferation, and attenuates tube formation in vitro. In addition, it dose-dependently attenuates thrombus formation to collagen under flow. Also binds proinflammatory cysteinyl leukotrienes (leukotrienes C4 (LTC4), D4 (LTD4) and E4 (LTE4)) with submicromolar affinities. The sequence is that of Tablysin 15 from Tabanus yao (Horsefly).